Reading from the N-terminus, the 187-residue chain is Elongation factor P (187 aa).

This sequence belongs to the elongation factor P family.

The protein resides in the cytoplasm. It participates in protein biosynthesis; polypeptide chain elongation. Functionally, involved in peptide bond synthesis. Stimulates efficient translation and peptide-bond synthesis on native or reconstituted 70S ribosomes in vitro. Probably functions indirectly by altering the affinity of the ribosome for aminoacyl-tRNA, thus increasing their reactivity as acceptors for peptidyl transferase. This chain is Elongation factor P, found in Rhodospirillum rubrum (strain ATCC 11170 / ATH 1.1.1 / DSM 467 / LMG 4362 / NCIMB 8255 / S1).